The chain runs to 278 residues: Ribosomal RNA small subunit methyltransferase A (278 aa).

Residues N27, L29, G54, E75, D101, and N120 each contribute to the S-adenosyl-L-methionine site.

This sequence belongs to the class I-like SAM-binding methyltransferase superfamily. rRNA adenine N(6)-methyltransferase family. RsmA subfamily.

The protein resides in the cytoplasm. It carries out the reaction adenosine(1518)/adenosine(1519) in 16S rRNA + 4 S-adenosyl-L-methionine = N(6)-dimethyladenosine(1518)/N(6)-dimethyladenosine(1519) in 16S rRNA + 4 S-adenosyl-L-homocysteine + 4 H(+). Functionally, specifically dimethylates two adjacent adenosines (A1518 and A1519) in the loop of a conserved hairpin near the 3'-end of 16S rRNA in the 30S particle. May play a critical role in biogenesis of 30S subunits. This chain is Ribosomal RNA small subunit methyltransferase A, found in Zymomonas mobilis subsp. mobilis (strain ATCC 31821 / ZM4 / CP4).